The sequence spans 240 residues: Large ribosomal subunit protein bL25 (240 aa).

Disordered regions lie at residues 1-20 (MAEN…GPAR) and 220-240 (PAAG…KGKK). Residues 220-229 (PAAGAAPAKG) show a composition bias toward low complexity. The segment covering 230-240 (GEAKGGDKGKK) has biased composition (basic and acidic residues).

The protein belongs to the bacterial ribosomal protein bL25 family. CTC subfamily. As to quaternary structure, part of the 50S ribosomal subunit; part of the 5S rRNA/L5/L18/L25 subcomplex. Contacts the 5S rRNA. Binds to the 5S rRNA independently of L5 and L18.

In terms of biological role, this is one of the proteins that binds to the 5S RNA in the ribosome where it forms part of the central protuberance. The sequence is that of Large ribosomal subunit protein bL25 from Anaeromyxobacter dehalogenans (strain 2CP-C).